Here is a 408-residue protein sequence, read N- to C-terminus: Probable medium-chain specific acyl-CoA dehydrogenase 2, mitochondrial (408 aa).

A mitochondrion-targeting transit peptide spans 1-5; that stretch reads MLSRL. FAD contacts are provided by residues 143-152 and 176-178; these read YCVTEPGAGS and WIT. Ser-152 provides a ligand contact to substrate. 263-266 is a binding site for substrate; it reads DMTR. Residues 291–293, 301–302, and 355–359 contribute to the FAD site; these read RKA, HQ, and MLFRC. The active-site Proton acceptor is the Glu-382. Gly-383 is a binding site for substrate. Residue 384-386 participates in FAD binding; that stretch reads TSQ. Residue Arg-394 coordinates substrate.

This sequence belongs to the acyl-CoA dehydrogenase family. In terms of assembly, homotetramer. Requires FAD as cofactor.

Its subcellular location is the mitochondrion matrix. It catalyses the reaction a medium-chain 2,3-saturated fatty acyl-CoA + oxidized [electron-transfer flavoprotein] + H(+) = a medium-chain (2E)-enoyl-CoA + reduced [electron-transfer flavoprotein]. It participates in lipid metabolism; mitochondrial fatty acid beta-oxidation. In terms of biological role, this enzyme is specific for acyl chain lengths of 4 to 16. The protein is Probable medium-chain specific acyl-CoA dehydrogenase 2, mitochondrial of Caenorhabditis briggsae.